Here is a 263-residue protein sequence, read N- to C-terminus: Histidine racemase (263 aa).

Residue cysteine 67 is the Proton acceptor of the active site. The active-site Proton donor is the cysteine 209.

The protein belongs to the histidine racemase family. As to quaternary structure, homodimer.

It carries out the reaction L-histidine = D-histidine. In terms of biological role, cofactor-independent isomerase that catalyzes the reversible conversion of L-histidine to D-histidine. May play a role in growth of F.nucleatum. This Fusobacterium nucleatum subsp. nucleatum (strain ATCC 23726 / VPI 4351) protein is Histidine racemase.